The sequence spans 94 residues: PqqA binding protein (94 aa).

The protein belongs to the PqqD family. As to quaternary structure, monomer. Interacts with PqqE.

It functions in the pathway cofactor biosynthesis; pyrroloquinoline quinone biosynthesis. Functionally, functions as a PqqA binding protein and presents PqqA to PqqE, in the pyrroloquinoline quinone (PQQ) biosynthetic pathway. The protein is PqqA binding protein of Acinetobacter baumannii (strain AB307-0294).